A 301-amino-acid chain; its full sequence is Aquaporin NIP2-3 (301 aa).

The next 2 helical transmembrane spans lie at 57 to 77 and 91 to 111; these read VISE…AASI and SVAG…ISGA. The NPA 1 signature appears at 114 to 116; it reads NPA. 3 helical membrane passes run 132 to 154, 172 to 192, and 200 to 220; these read VPFY…KAVL, ALAI…AVAT, and LAGL…GPVS. The short motif at 225 to 227 is the NPA 2 element; it reads NPA. Residues 238 to 258 traverse the membrane as a helical segment; sequence VFTGLWIYFLGPVVGTLSGAW.

It belongs to the MIP/aquaporin (TC 1.A.8) family. NIP (TC 1.A.8.12) subfamily.

It localises to the membrane. In terms of biological role, aquaporins facilitate the transport of water and small neutral solutes across cell membranes. In Zea mays (Maize), this protein is Aquaporin NIP2-3 (NIP2-3).